The primary structure comprises 1486 residues: Phosphatidylinositol 3-kinase C2 domain-containing subunit gamma (1486 aa).

Positions 285–371 (KTKFNIHIFI…IQLHLQKSRE (87 aa)) constitute a PI3K-RBD domain. The C2 PI3K-type domain occupies 521–669 (LPSHLSFTVY…SPVTLQIDFP (149 aa)). The PIK helical domain maps to 684-860 (RSNLEEPLKE…QKLLAALQFC (177 aa)). The region spanning 929–1207 (DHDACSYFTS…KIKESLECFP (279 aa)) is the PI3K/PI4K catalytic domain. The segment at 935–941 (YFTSNAL) is G-loop. Residues 1071 to 1079 (GVCDRHNDN) form a catalytic loop region. Residues 1090-1116 (HIDFGKFLGHAQTFGGIKRDRAPFIFT) are activation loop. The PX domain maps to 1240–1352 (LSTTRSIERA…SFFLSEAVQQ (113 aa)). In terms of domain architecture, C2 spans 1369 to 1486 (KKPKVQLVIS…KWYPLGNSII (118 aa)).

Belongs to the PI3/PI4-kinase family. As to expression, highly expressed in liver, prostate and testis. Lower levels in small intestine, kidney and pancreas.

It is found in the membrane. The catalysed reaction is a 1,2-diacyl-sn-glycero-3-phospho-(1D-myo-inositol 4-phosphate) + ATP = a 1,2-diacyl-sn-glycero-3-phospho-(1D-myo-inositol-3,4-bisphosphate) + ADP + H(+). It carries out the reaction a 1,2-diacyl-sn-glycero-3-phospho-(1D-myo-inositol) + ATP = a 1,2-diacyl-sn-glycero-3-phospho-(1D-myo-inositol-3-phosphate) + ADP + H(+). Its function is as follows. Generates phosphatidylinositol 3-phosphate (PtdIns3P) and phosphatidylinositol 3,4-bisphosphate (PtdIns(3,4)P2) that act as second messengers. May play a role in SDF1A-stimulated chemotaxis. The protein is Phosphatidylinositol 3-kinase C2 domain-containing subunit gamma (PIK3C2G) of Homo sapiens (Human).